Consider the following 295-residue polypeptide: Bifunctional protein FolD (295 aa).

Residues 167–169 (GRS), S192, and I233 contribute to the NADP(+) site.

This sequence belongs to the tetrahydrofolate dehydrogenase/cyclohydrolase family. Homodimer.

It carries out the reaction (6R)-5,10-methylene-5,6,7,8-tetrahydrofolate + NADP(+) = (6R)-5,10-methenyltetrahydrofolate + NADPH. The enzyme catalyses (6R)-5,10-methenyltetrahydrofolate + H2O = (6R)-10-formyltetrahydrofolate + H(+). The protein operates within one-carbon metabolism; tetrahydrofolate interconversion. In terms of biological role, catalyzes the oxidation of 5,10-methylenetetrahydrofolate to 5,10-methenyltetrahydrofolate and then the hydrolysis of 5,10-methenyltetrahydrofolate to 10-formyltetrahydrofolate. The chain is Bifunctional protein FolD from Paramagnetospirillum magneticum (strain ATCC 700264 / AMB-1) (Magnetospirillum magneticum).